The chain runs to 171 residues: UPF0312 protein MW2606 (171 aa).

Belongs to the UPF0312 family.

This chain is UPF0312 protein MW2606, found in Staphylococcus aureus (strain MW2).